A 648-amino-acid chain; its full sequence is Threonine--tRNA ligase (648 aa).

The 61-residue stretch at 1–61 (MITITFPDGA…EEDGSIEIIT (61 aa)) folds into the TGS domain. The interval 242–540 (DHRKLGKELD…LIETYKGAFP (299 aa)) is catalytic. Cys336, His387, and His517 together coordinate Zn(2+).

The protein belongs to the class-II aminoacyl-tRNA synthetase family. In terms of assembly, homodimer. Zn(2+) serves as cofactor.

It localises to the cytoplasm. The enzyme catalyses tRNA(Thr) + L-threonine + ATP = L-threonyl-tRNA(Thr) + AMP + diphosphate + H(+). Functionally, catalyzes the attachment of threonine to tRNA(Thr) in a two-step reaction: L-threonine is first activated by ATP to form Thr-AMP and then transferred to the acceptor end of tRNA(Thr). Also edits incorrectly charged L-seryl-tRNA(Thr). This is Threonine--tRNA ligase from Streptococcus equi subsp. zooepidemicus (strain H70).